Consider the following 282-residue polypeptide: Pantothenate synthetase (282 aa).

30–37 (MGYLHEGH) lines the ATP pocket. H37 serves as the catalytic Proton donor. Residue Q61 coordinates (R)-pantoate. Residue Q61 coordinates beta-alanine. 147 to 150 (GMKD) is an ATP binding site. Residue Q153 participates in (R)-pantoate binding. ATP is bound by residues V176 and 184–187 (KSSR).

Belongs to the pantothenate synthetase family. In terms of assembly, homodimer.

It is found in the cytoplasm. It catalyses the reaction (R)-pantoate + beta-alanine + ATP = (R)-pantothenate + AMP + diphosphate + H(+). It functions in the pathway cofactor biosynthesis; (R)-pantothenate biosynthesis; (R)-pantothenate from (R)-pantoate and beta-alanine: step 1/1. Catalyzes the condensation of pantoate with beta-alanine in an ATP-dependent reaction via a pantoyl-adenylate intermediate. In Bacillus cytotoxicus (strain DSM 22905 / CIP 110041 / 391-98 / NVH 391-98), this protein is Pantothenate synthetase.